The chain runs to 276 residues: Putative pyruvate, phosphate dikinase regulatory protein 1 (276 aa).

157-164 (GVSRTSKT) lines the ADP pocket.

Belongs to the pyruvate, phosphate/water dikinase regulatory protein family. PDRP subfamily.

The catalysed reaction is N(tele)-phospho-L-histidyl/L-threonyl-[pyruvate, phosphate dikinase] + ADP = N(tele)-phospho-L-histidyl/O-phospho-L-threonyl-[pyruvate, phosphate dikinase] + AMP + H(+). It carries out the reaction N(tele)-phospho-L-histidyl/O-phospho-L-threonyl-[pyruvate, phosphate dikinase] + phosphate + H(+) = N(tele)-phospho-L-histidyl/L-threonyl-[pyruvate, phosphate dikinase] + diphosphate. In terms of biological role, bifunctional serine/threonine kinase and phosphorylase involved in the regulation of the pyruvate, phosphate dikinase (PPDK) by catalyzing its phosphorylation/dephosphorylation. The sequence is that of Putative pyruvate, phosphate dikinase regulatory protein 1 from Staphylococcus haemolyticus (strain JCSC1435).